The chain runs to 268 residues: Undecaprenyl-diphosphatase (268 aa).

7 consecutive transmembrane segments (helical) span residues 41 to 61, 89 to 109, 114 to 134, 155 to 175, 191 to 211, 218 to 238, and 248 to 268; these read PGPS…VCYF, IFIG…FVPY, IFRS…LMYI, LIGL…GVTI, FSFL…FISS, FSFF…LLAI, and NGLK…LLNL.

Belongs to the UppP family.

The protein localises to the cell inner membrane. The enzyme catalyses di-trans,octa-cis-undecaprenyl diphosphate + H2O = di-trans,octa-cis-undecaprenyl phosphate + phosphate + H(+). Its function is as follows. Catalyzes the dephosphorylation of undecaprenyl diphosphate (UPP). Confers resistance to bacitracin. The protein is Undecaprenyl-diphosphatase of Prochlorococcus marinus (strain MIT 9312).